Here is a 955-residue protein sequence, read N- to C-terminus: Thyroid hormone receptor-associated protein 3 (955 aa).

Positions 1-94 are disordered; sequence MSKTNKSKSG…YFRGRNRGFY (94 aa). S2 is modified (N-acetylserine). Residues 2 to 190 are required for mRNA splicing activation; sequence SKTNKSKSGS…KSSSKDSRPS (189 aa). Over residues 14 to 51 the composition is skewed to basic residues; it reads SRSRSASRSRSRSFSKSRSRSRSLSRSRKRRLSSRSRS. At R17 the chain carries Dimethylated arginine. Residues 58 to 75 show a composition bias toward basic and acidic residues; sequence HNRERNHPRVYQNRDFRG. At R66 the chain carries Asymmetric dimethylarginine. A compositionally biased stretch (low complexity) spans 82-94; sequence RPYYFRGRNRGFY. Asymmetric dimethylarginine occurs at positions 101 and 108. A disordered region spans residues 117-559; that stretch reads AYSPRRGRSR…AKGDFPTGKS (443 aa). A compositionally biased stretch (basic residues) spans 121–143; that stretch reads RRGRSRSRSPKRRSPSPRSRSHS. The span at 144–155 shows a compositional bias: basic and acidic residues; sequence RNSDKSSSDRSR. The span at 157–166 shows a compositional bias: low complexity; that stretch reads SSSSRSSSNH. Over residues 167–188 the composition is skewed to basic and acidic residues; the sequence is SRVESSKRKSAKEKKSSSKDSR. K202 is covalently cross-linked (Glycyl lysine isopeptide (Lys-Gly) (interchain with G-Cter in SUMO1); alternate). Residue K202 forms a Glycyl lysine isopeptide (Lys-Gly) (interchain with G-Cter in SUMO2); alternate linkage. The segment covering 204 to 220 has biased composition (polar residues); that stretch reads QTFSGGTSQDTKASESS. K215 participates in a covalent cross-link: Glycyl lysine isopeptide (Lys-Gly) (interchain with G-Cter in SUMO2). The residue at position 220 (S220) is a Phosphoserine. Residue K221 forms a Glycyl lysine isopeptide (Lys-Gly) (interchain with G-Cter in SUMO2); alternate linkage. An N6-acetyllysine; alternate modification is found at K221. A phosphoserine mark is found at S232, S237, S240, S243, and S248. K252 participates in a covalent cross-link: Glycyl lysine isopeptide (Lys-Gly) (interchain with G-Cter in SUMO2); alternate. The residue at position 252 (K252) is an N6-methyllysine; alternate. Residues S253 and S257 each carry the phosphoserine modification. Over residues 266–276 the composition is skewed to pro residues; it reads RPSPVPKPSPP. Residues 282–300 show a composition bias toward polar residues; that stretch reads QMGSTLPSGAGYQSGTHQG. A compositionally biased stretch (low complexity) spans 305–331; it reads GSGSLSPSKKSPVGKSPPSTGSTYGSS. Residues S315, S320, and S323 each carry the phosphoserine modification. At T324 the chain carries Phosphothreonine. S326 is subject to Phosphoserine. At Y328 the chain carries Phosphotyrosine. K333 participates in a covalent cross-link: Glycyl lysine isopeptide (Lys-Gly) (interchain with G-Cter in SUMO2). S339 carries the phosphoserine modification. A Glycyl lysine isopeptide (Lys-Gly) (interchain with G-Cter in SUMO2); alternate cross-link involves residue K346. K346 is modified (N6-acetyllysine; alternate). Residues 347–377 show a composition bias toward basic and acidic residues; that stretch reads RYLEEQKTENGKDKEQKQTNTDKEKIKEKGS. Residues K353 and K375 each participate in a glycyl lysine isopeptide (Lys-Gly) (interchain with G-Cter in SUMO2) cross-link. Positions 359–955 are required for mRNA decay activity; sequence DKEQKQTNTD…EKDNIQPTTE (597 aa). Residues S377 and S379 each carry the phosphoserine modification. Residue K387 forms a Glycyl lysine isopeptide (Lys-Gly) (interchain with G-Cter in SUMO1); alternate linkage. K387 is covalently cross-linked (Glycyl lysine isopeptide (Lys-Gly) (interchain with G-Cter in SUMO2); alternate). Residues K389 and K396 each participate in a glycyl lysine isopeptide (Lys-Gly) (interchain with G-Cter in SUMO2) cross-link. T397 is subject to Phosphothreonine. A Glycyl lysine isopeptide (Lys-Gly) (interchain with G-Cter in SUMO2) cross-link involves residue K401. Phosphoserine occurs at positions 406 and 408. A compositionally biased stretch (basic and acidic residues) spans 414-452; sequence LRDDFEKKMADFHKEEMDDQDKDKAKGRKESEFDDEPKF. Residues K421 and K427 each participate in a glycyl lysine isopeptide (Lys-Gly) (interchain with G-Cter in SUMO2) cross-link. Residue S444 is modified to Phosphoserine. A Glycyl lysine isopeptide (Lys-Gly) (interchain with G-Cter in SUMO1); alternate cross-link involves residue K451. Residues K451 and K455 each participate in a glycyl lysine isopeptide (Lys-Gly) (interchain with G-Cter in SUMO2); alternate cross-link. K455 is subject to N6-acetyllysine; alternate. Glycyl lysine isopeptide (Lys-Gly) (interchain with G-Cter in SUMO2) cross-links involve residues K461 and K467. S468 carries the post-translational modification Phosphoserine. Residues K470 and K481 each participate in a glycyl lysine isopeptide (Lys-Gly) (interchain with G-Cter in SUMO2); alternate cross-link. N6-acetyllysine; alternate occurs at positions 470 and 481. Residue K486 forms a Glycyl lysine isopeptide (Lys-Gly) (interchain with G-Cter in SUMO2) linkage. Basic and acidic residues predominate over residues 495-521; the sequence is FPERSKKEDRGKRSEGGHRGFVPEKNF. K519 carries the post-translational modification N6-acetyllysine. K527 participates in a covalent cross-link: Glycyl lysine isopeptide (Lys-Gly) (interchain with G-Cter in SUMO2); alternate. K527 bears the N6-acetyllysine; alternate mark. Position 535 is a phosphoserine (S535). Residues 540–550 are compositionally biased toward basic and acidic residues; it reads KTSESRDKLGA. Residue K551 forms a Glycyl lysine isopeptide (Lys-Gly) (interchain with G-Cter in SUMO2) linkage. 552–559 provides a ligand contact to ATP; sequence GDFPTGKS. A Glycyl lysine isopeptide (Lys-Gly) (interchain with G-Cter in SUMO2); alternate cross-link involves residue K558. Position 558 is an N6-acetyllysine; alternate (K558). Phosphoserine occurs at positions 560, 562, and 575. K602 is covalently cross-linked (Glycyl lysine isopeptide (Lys-Gly) (interchain with G-Cter in SUMO2)). Residues S619, S622, S672, S682, and S684 each carry the phosphoserine modification. The span at 663–680 shows a compositional bias: basic and acidic residues; sequence EQEAAKNKKSPEIHRRID. The disordered stretch occupies residues 663-955; the sequence is EQEAAKNKKS…EKDNIQPTTE (293 aa). A compositionally biased stretch (basic and acidic residues) spans 691 to 761; it reads LAHDEMKSPR…RSAEKTEKTH (71 aa). Residue K697 forms a Glycyl lysine isopeptide (Lys-Gly) (interchain with G-Cter in SUMO2) linkage. At S698 the chain carries Phosphoserine. Residues K705, K709, K711, K756, and K759 each participate in a glycyl lysine isopeptide (Lys-Gly) (interchain with G-Cter in SUMO2) cross-link. Basic residues predominate over residues 762–775; sequence KGSKKQKKHRRARD. Over residues 779–789 the composition is skewed to low complexity; sequence SSSSSSQSSHS. K811 bears the N6-acetyllysine mark. R845 is subject to Asymmetric dimethylarginine. Residues 848-859 are compositionally biased toward low complexity; sequence YSGNNNNNSNND. T874 is subject to Phosphothreonine. Residues K876 and K879 each participate in a glycyl lysine isopeptide (Lys-Gly) (interchain with G-Cter in SUMO2) cross-link. Basic and acidic residues predominate over residues 881–895; it reads YLHDDREGEGSDKWV. Phosphoserine occurs at positions 928 and 939. Positions 930-940 are enriched in acidic residues; sequence EEGEIEDDESG.

The protein belongs to the BCLAF1/THRAP3 family. In terms of assembly, associated with the large multiprotein complex TRAP (Mediator complex-like). Interacts with SFPQ; the interaction is dependent on SFPQ phosphorylation at 'Thr-687' and inhibits binding of SFPQ to an ESS1 exonic splicing silencer element-containing RNA. Interacts with NXF1. Component of the SNARP complex which consists at least of SNIP1, SNW1, THRAP3, BCLAF1 and PNN. Associated with spliced mRNP complexes. Interacts with HELZ2 and PPARG. Interacts with CLOCK and BMAL1. Component of a MACOM-like complex, named WTAP complex, composed of WTAP, ZC3H13, CBLL1, KIAA1429, RBM15, BCLAF1 and THRAP3. Post-translationally, ADP-ribosylation during genotoxic stress promotes accumulation in nuclear speckles. Ubiquitous.

It localises to the nucleus. It is found in the nucleoplasm. The protein resides in the nucleus speckle. Involved in pre-mRNA splicing. Remains associated with spliced mRNA after splicing which probably involves interactions with the exon junction complex (EJC). Can trigger mRNA decay which seems to be independent of nonsense-mediated decay involving premature stop codons (PTC) recognition. May be involved in nuclear mRNA decay. Involved in regulation of signal-induced alternative splicing. During splicing of PTPRC/CD45 is proposed to sequester phosphorylated SFPQ from PTPRC/CD45 pre-mRNA in resting T-cells. Involved in cyclin-D1/CCND1 mRNA stability probably by acting as component of the SNARP complex which associates with both the 3'end of the CCND1 gene and its mRNA. Involved in response to DNA damage. Is excluced from DNA damage sites in a manner that parallels transcription inhibition; the function may involve the SNARP complex. Initially thought to play a role in transcriptional coactivation through its association with the TRAP complex; however, it is not regarded as a stable Mediator complex subunit. Cooperatively with HELZ2, enhances the transcriptional activation mediated by PPARG, maybe through the stabilization of the PPARG binding to DNA in presence of ligand. May play a role in the terminal stage of adipocyte differentiation. Plays a role in the positive regulation of the circadian clock. Acts as a coactivator of the CLOCK-BMAL1 heterodimer and promotes its transcriptional activator activity and binding to circadian target genes. This Homo sapiens (Human) protein is Thyroid hormone receptor-associated protein 3.